Here is a 313-residue protein sequence, read N- to C-terminus: MVAPMKGQVCVVTGASRGIGRGIALQLCKAGATVYITGRHLDTLRATAQEAQSLGGRCVPVVCDSSQESEVKSLFEQVDREQKGRLDVLVNNAYAGVQAILNTTNKSFWEVPASIWDDINNVGLRGHYLCSVYGARLMVPAGKGLIVIVSSPGGLQHMFNVPYGVGKAACDRLAADCAHELRRHGVSYVSLWPGLVQTEMVKEFMAKEDTPEDPLFKKMKPDFSSAESPEMSGKCVVALATDPNILNLSGKVLPSCDLARRYGLKDIDGRPVKDYFSLGYALSQVSSLGWLNSFLPGFLRVPKWVVTLYNSKF.

An NAD(+)-binding site is contributed by I19. R21 is subject to Omega-N-methylarginine. D64 is an NAD(+) binding site. A substrate-binding site is contributed by S151. NAD(+) is bound by residues Y163, K167, and T198. Catalysis depends on Y163, which acts as the Proton acceptor.

Belongs to the short-chain dehydrogenases/reductases (SDR) family.

The protein resides in the endoplasmic reticulum. It catalyses the reaction 17alpha-estradiol + NADP(+) = estrone + NADPH + H(+). The enzyme catalyses testosterone + NADP(+) = androst-4-ene-3,17-dione + NADPH + H(+). It carries out the reaction prostaglandin E1 + NADPH + H(+) = prostaglandin F1 + NADP(+). The catalysed reaction is isatin + NADPH + H(+) = 3-hydroxyindolin-2-one + NADP(+). Functionally, NADPH-dependent oxidoreductase which catalyzes the reduction of some steroids (estrone, androstene-3,17-dione and cortisone) as well as prostaglandin E1, isatin and xenobiotics in vitro. May have a role in steroid and/or xenobiotic metabolism. This chain is Dehydrogenase/reductase SDR family member 1, found in Mus musculus (Mouse).